A 498-amino-acid polypeptide reads, in one-letter code: ATP synthase subunit beta, chloroplastic (498 aa).

Position 172 to 179 (172 to 179 (GGAGVGKT)) interacts with ATP.

It belongs to the ATPase alpha/beta chains family. As to quaternary structure, F-type ATPases have 2 components, CF(1) - the catalytic core - and CF(0) - the membrane proton channel. CF(1) has five subunits: alpha(3), beta(3), gamma(1), delta(1), epsilon(1). CF(0) has four main subunits: a(1), b(1), b'(1) and c(9-12).

It is found in the plastid. The protein localises to the chloroplast thylakoid membrane. The enzyme catalyses ATP + H2O + 4 H(+)(in) = ADP + phosphate + 5 H(+)(out). In terms of biological role, produces ATP from ADP in the presence of a proton gradient across the membrane. The catalytic sites are hosted primarily by the beta subunits. The protein is ATP synthase subunit beta, chloroplastic of Atropa belladonna (Belladonna).